We begin with the raw amino-acid sequence, 126 residues long: Ribulose bisphosphate carboxylase small subunit, chloroplastic 1 (126 aa).

This sequence belongs to the RuBisCO small chain family. Heterohexadecamer of 8 large and 8 small subunits.

Its subcellular location is the plastid. The protein resides in the chloroplast. Functionally, ruBisCO catalyzes two reactions: the carboxylation of D-ribulose 1,5-bisphosphate, the primary event in carbon dioxide fixation, as well as the oxidative fragmentation of the pentose substrate. Both reactions occur simultaneously and in competition at the same active site. Although the small subunit is not catalytic it is essential for maximal activity. The protein is Ribulose bisphosphate carboxylase small subunit, chloroplastic 1 of Acetabularia peniculus (Green alga).